Here is a 696-residue protein sequence, read N- to C-terminus: Translation initiation factor IF-2 (696 aa).

Residues 187–361 (ERPPVVTVMG…EMQEIKGIPD (175 aa)) form the tr-type G domain. Residues 196–203 (GHVDHGKT) form a G1 region. 196–203 (GHVDHGKT) provides a ligand contact to GTP. Positions 221–225 (GITQS) are G2. The G3 stretch occupies residues 242-245 (DTPG). Residues 242–246 (DTPGH) and 296–299 (NKID) each bind GTP. The segment at 296–299 (NKID) is G4. The segment at 333 to 335 (SAK) is G5.

This sequence belongs to the TRAFAC class translation factor GTPase superfamily. Classic translation factor GTPase family. IF-2 subfamily.

The protein resides in the cytoplasm. In terms of biological role, one of the essential components for the initiation of protein synthesis. Protects formylmethionyl-tRNA from spontaneous hydrolysis and promotes its binding to the 30S ribosomal subunits. Also involved in the hydrolysis of GTP during the formation of the 70S ribosomal complex. In Thermosipho africanus (strain TCF52B), this protein is Translation initiation factor IF-2.